A 371-amino-acid polypeptide reads, in one-letter code: MDDRPIVFFDIAIGGQLAGRVAFRLYSDLVPKTAENFRALCTGEKGLGQSGKPLWYKGSAFHRVIKGFMCQGGDFTAGNGTGGESIYGEKFEDEGFPVHHSRPFLLSMANAGPNTNGSQFFITVSATPHLDGKHVVFGEVIKGRSVVRTIENNPATNGDVPKEPVVIADCGQLSSDDPFLAERTSTDGDPYEDYPDDEDQELGNPETVLQIAKTIREVANRLYKQGDISGALQKYSKSIRYLDVHQELPENSPPDLNEQYKSLLAPLLLNSALAAIRIEPHSAANAMNAVANTSRALNRLELSNADKAKAYYRRGLAKTIMRDEVGAEQDLKTANELLPEDGAIAAELAKIIQKKKEQREREKKAYKKMFA.

Positions 8–172 (FFDIAIGGQL…EPVVIADCGQ (165 aa)) constitute a PPIase cyclophilin-type domain. Residues 175 to 202 (SDDPFLAERTSTDGDPYEDYPDDEDQEL) form a disordered region. Residues 189 to 201 (DPYEDYPDDEDQE) are compositionally biased toward acidic residues. 3 TPR repeats span residues 212–245 (AKTI…LDVH), 265–303 (APLL…LELS), and 308–341 (AKAY…LPED).

Belongs to the cyclophilin-type PPIase family. PPIase D subfamily.

It localises to the cytoplasm. It carries out the reaction [protein]-peptidylproline (omega=180) = [protein]-peptidylproline (omega=0). Functionally, PPIases accelerate the folding of proteins. It catalyzes the cis-trans isomerization of proline imidic peptide bonds in oligopeptides. In Amanita muscaria (Fly agaric), this protein is Peptidyl-prolyl cis-trans isomerase D (Cyp40).